The sequence spans 678 residues: Amino-acid acetyltransferase, mitochondrial (678 aa).

The segment at 86–111 is disordered; the sequence is LKAQHPPKAQTEPTTGHSKGTVTQSL. Positions 96 to 111 are enriched in polar residues; that stretch reads TEPTTGHSKGTVTQSL. Residues 499-668 enclose the N-acetyltransferase domain; sequence NRPRLSLDDP…YEQVCRSIQP (170 aa).

It belongs to the acetyltransferase family.

The protein resides in the mitochondrion. It carries out the reaction L-glutamate + acetyl-CoA = N-acetyl-L-glutamate + CoA + H(+). It functions in the pathway amino-acid biosynthesis; L-arginine biosynthesis; N(2)-acetyl-L-ornithine from L-glutamate: step 1/4. In terms of biological role, N-acetylglutamate synthase involved in arginine biosynthesis. The protein is Amino-acid acetyltransferase, mitochondrial (arg2) of Aspergillus oryzae (strain ATCC 42149 / RIB 40) (Yellow koji mold).